Here is a 382-residue protein sequence, read N- to C-terminus: Chorismate synthase (382 aa).

The NADP(+) site is built by Arg-39 and Arg-45. FMN is bound by residues 127–129, 245–246, Gly-290, 305–309, and Arg-331; these read RAS, QA, and KPIPT.

This sequence belongs to the chorismate synthase family. In terms of assembly, homotetramer. Requires FMNH2 as cofactor.

The catalysed reaction is 5-O-(1-carboxyvinyl)-3-phosphoshikimate = chorismate + phosphate. It participates in metabolic intermediate biosynthesis; chorismate biosynthesis; chorismate from D-erythrose 4-phosphate and phosphoenolpyruvate: step 7/7. Its function is as follows. Catalyzes the anti-1,4-elimination of the C-3 phosphate and the C-6 proR hydrogen from 5-enolpyruvylshikimate-3-phosphate (EPSP) to yield chorismate, which is the branch point compound that serves as the starting substrate for the three terminal pathways of aromatic amino acid biosynthesis. This reaction introduces a second double bond into the aromatic ring system. The chain is Chorismate synthase from Desulfitobacterium hafniense (strain DSM 10664 / DCB-2).